We begin with the raw amino-acid sequence, 397 residues long: MTSAEPRAYPFNDVHGLTLAGRYGELQETEPVSRVRPPYGEEAWLVTRYEDVRAVLGDGRFVRGPSMTRDEPRTRPEMVKGGLLSMDPPEHSRLRRLVVKAFTARRAESLRPRAREIAHELVDQMAATGQPADLVAMFARQLPVRVICELLGVPSADHDRFTRWSGAFLSTAEVTAEEMQEAAEQAYAYMGDLIDRRRKEPTDDLVSALVQARDQQDSLSEQELLDLAIGLLVAGYESTTTQIADFVYLLMTRPELRRQLLDRPELIPSAVEELTRWVPLGVGTAFPRYAVEDVTLRGVTIRAGEPVLASTGAANRDQAQFPDADRIDVDRTPNQHLGFGHGVHHCLGAPLARVELQVALEVLLQRLPGIRLGIPETQLRWSEGMLLRGPLELPVVW.

The tract at residues 63–86 (RGPSMTRDEPRTRPEMVKGGLLSM) is disordered. Residues 68–78 (TRDEPRTRPEM) are compositionally biased toward basic and acidic residues. Gly81 lines the substrate pocket. The heme site is built by His91, Arg95, Arg288, His344, and Cys346.

It belongs to the cytochrome P450 family. Heme is required as a cofactor.

It functions in the pathway antibiotic biosynthesis; mycinamicin biosynthesis. In terms of biological role, involved in the biosynthesis of mycinamicin, a 16-membered macrolide antibiotic. Catalyzes consecutive hydroxylation (at C14) and epoxidation (at C12-C13) reactions with mycinamicin IV as initial substrate, leading to mycinamicin II. These reactions require prior dimethylation of 6-deoxyallose to mycinose for effective conversion by the dual function MycG enzyme. This Micromonospora griseorubida protein is Mycinamicin IV hydroxylase/epoxidase.